Reading from the N-terminus, the 223-residue chain is Endonuclease V (223 aa).

Mg(2+) is bound by residues aspartate 35 and aspartate 103.

It belongs to the endonuclease V family. Mg(2+) is required as a cofactor.

It localises to the cytoplasm. The enzyme catalyses Endonucleolytic cleavage at apurinic or apyrimidinic sites to products with a 5'-phosphate.. In terms of biological role, DNA repair enzyme involved in the repair of deaminated bases. Selectively cleaves double-stranded DNA at the second phosphodiester bond 3' to a deoxyinosine leaving behind the intact lesion on the nicked DNA. The sequence is that of Endonuclease V from Escherichia coli O139:H28 (strain E24377A / ETEC).